The following is a 134-amino-acid chain: Estradiol 17-beta-dehydrogenase 8 (134 aa).

Residue S38 coordinates substrate. K42 carries the N6-succinyllysine modification. The active-site Proton acceptor is the Y51. NAD(+) contacts are provided by residues 51 to 55 (YAASK) and 84 to 86 (IAT). Residue K55 is modified to N6-succinyllysine.

Belongs to the short-chain dehydrogenases/reductases (SDR) family. Heterotetramer with CBR4; contains two molecules of HSD17B8 and CBR4.

Its subcellular location is the mitochondrion matrix. It catalyses the reaction 17beta-estradiol + NAD(+) = estrone + NADH + H(+). The catalysed reaction is 17beta-estradiol + NADP(+) = estrone + NADPH + H(+). The enzyme catalyses testosterone + NAD(+) = androst-4-ene-3,17-dione + NADH + H(+). Its pathway is steroid biosynthesis; estrogen biosynthesis. It functions in the pathway lipid metabolism; fatty acid biosynthesis. In terms of biological role, NAD-dependent 17-beta-hydroxysteroid dehydrogenase with highest activity towards estradiol. Has very low activity towards testosterone. The heterotetramer with CBR4 has NADH-dependent 3-ketoacyl-acyl carrier protein reductase activity, and thereby plays a role in mitochondrial fatty acid biosynthesis. Within the heterotetramer, HSD17B8 binds NADH; CBR4 binds NADPD. In Callithrix jacchus (White-tufted-ear marmoset), this protein is Estradiol 17-beta-dehydrogenase 8 (HSD17B8).